We begin with the raw amino-acid sequence, 333 residues long: Anthranilate phosphoribosyltransferase (333 aa).

5-phospho-alpha-D-ribose 1-diphosphate-binding positions include Gly81, 84 to 85 (GD), Thr89, 91 to 94 (NIST), 109 to 117 (KHGNRSVSS), and Ala121. Gly81 contacts anthranilate. A Mg(2+)-binding site is contributed by Ser93. Asn112 is an anthranilate binding site. Position 167 (Arg167) interacts with anthranilate. Mg(2+)-binding residues include Asp225 and Glu226.

The protein belongs to the anthranilate phosphoribosyltransferase family. Homodimer. Mg(2+) serves as cofactor.

The catalysed reaction is N-(5-phospho-beta-D-ribosyl)anthranilate + diphosphate = 5-phospho-alpha-D-ribose 1-diphosphate + anthranilate. Its pathway is amino-acid biosynthesis; L-tryptophan biosynthesis; L-tryptophan from chorismate: step 2/5. Catalyzes the transfer of the phosphoribosyl group of 5-phosphorylribose-1-pyrophosphate (PRPP) to anthranilate to yield N-(5'-phosphoribosyl)-anthranilate (PRA). The chain is Anthranilate phosphoribosyltransferase from Pasteurella multocida (strain Pm70).